The sequence spans 37 residues: Large ribosomal subunit protein bL36c (37 aa).

It belongs to the bacterial ribosomal protein bL36 family.

Its subcellular location is the plastid. It localises to the chloroplast. The sequence is that of Large ribosomal subunit protein bL36c from Liriodendron tulipifera (Tuliptree).